A 331-amino-acid polypeptide reads, in one-letter code: Lipoyl synthase (331 aa).

7 residues coordinate [4Fe-4S] cluster: cysteine 74, cysteine 79, cysteine 85, cysteine 100, cysteine 104, cysteine 107, and serine 314. Residues 85 to 303 (CFGKGTATFM…ETEAYKMGFT (219 aa)) form the Radical SAM core domain.

It belongs to the radical SAM superfamily. Lipoyl synthase family. Requires [4Fe-4S] cluster as cofactor.

It localises to the cytoplasm. It catalyses the reaction [[Fe-S] cluster scaffold protein carrying a second [4Fe-4S](2+) cluster] + N(6)-octanoyl-L-lysyl-[protein] + 2 oxidized [2Fe-2S]-[ferredoxin] + 2 S-adenosyl-L-methionine + 4 H(+) = [[Fe-S] cluster scaffold protein] + N(6)-[(R)-dihydrolipoyl]-L-lysyl-[protein] + 4 Fe(3+) + 2 hydrogen sulfide + 2 5'-deoxyadenosine + 2 L-methionine + 2 reduced [2Fe-2S]-[ferredoxin]. It functions in the pathway protein modification; protein lipoylation via endogenous pathway; protein N(6)-(lipoyl)lysine from octanoyl-[acyl-carrier-protein]: step 2/2. Functionally, catalyzes the radical-mediated insertion of two sulfur atoms into the C-6 and C-8 positions of the octanoyl moiety bound to the lipoyl domains of lipoate-dependent enzymes, thereby converting the octanoylated domains into lipoylated derivatives. The sequence is that of Lipoyl synthase from Leptothrix cholodnii (strain ATCC 51168 / LMG 8142 / SP-6) (Leptothrix discophora (strain SP-6)).